The chain runs to 504 residues: Signal recognition particle receptor FtsY (504 aa).

2 disordered regions span residues 1 to 71 and 116 to 135; these read MFNW…DDYL and ESDQATATEADLPSPETEIT. GTP is bound by residues 308-315, 391-395, and 455-458; these read GVNGAGKT, DTAGR, and TKLD.

It belongs to the GTP-binding SRP family. FtsY subfamily. As to quaternary structure, part of the signal recognition particle protein translocation system, which is composed of SRP and FtsY.

It localises to the cell inner membrane. The protein localises to the cytoplasm. It carries out the reaction GTP + H2O = GDP + phosphate + H(+). In terms of biological role, involved in targeting and insertion of nascent membrane proteins into the cytoplasmic membrane. Acts as a receptor for the complex formed by the signal recognition particle (SRP) and the ribosome-nascent chain (RNC). In Synechocystis sp. (strain ATCC 27184 / PCC 6803 / Kazusa), this protein is Signal recognition particle receptor FtsY.